Here is a 123-residue protein sequence, read N- to C-terminus: Protein Wnt-3a (123 aa).

A lipid anchor (O-palmitoleoyl serine) is attached at S1. A disulfide bond links C89 and C104. N-linked (GlcNAc...) asparagine glycosylation occurs at N90.

This sequence belongs to the Wnt family. In terms of processing, disulfide bonds have critical and distinct roles in secretion and activity. Loss of each conserved cysteine results in high molecular weight oxidized Wnt oligomers, which are formed through inter-Wnt disulfide bonding. Post-translationally, palmitoleoylation is required for efficient binding to frizzled receptors. Depalmitoleoylation leads to Wnt signaling pathway inhibition.

It localises to the secreted. Its subcellular location is the extracellular space. The protein localises to the extracellular matrix. Functionally, ligand for members of the frizzled family of seven transmembrane receptors. Functions in the canonical Wnt signaling pathway that results in activation of transcription factors of the TCF/LEF family. Required for normal embryonic mesoderm development and formation of caudal somites. Required for normal morphogenesis of the developing neural tube. This chain is Protein Wnt-3a (WNT-3A), found in Alopias vulpinus (Common thresher shark).